The sequence spans 160 residues: Phosphopantetheine adenylyltransferase (160 aa).

Thr9 is a binding site for substrate. ATP is bound by residues 9-10 (TF) and His17. 3 residues coordinate substrate: Lys41, Leu73, and Arg87. Residues 88–90 (GLR), Glu98, and 123–129 (FSYTSSS) each bind ATP.

Belongs to the bacterial CoaD family. Homohexamer. Requires Mg(2+) as cofactor.

The protein resides in the cytoplasm. The catalysed reaction is (R)-4'-phosphopantetheine + ATP + H(+) = 3'-dephospho-CoA + diphosphate. It functions in the pathway cofactor biosynthesis; coenzyme A biosynthesis; CoA from (R)-pantothenate: step 4/5. In terms of biological role, reversibly transfers an adenylyl group from ATP to 4'-phosphopantetheine, yielding dephospho-CoA (dPCoA) and pyrophosphate. The polypeptide is Phosphopantetheine adenylyltransferase (Opitutus terrae (strain DSM 11246 / JCM 15787 / PB90-1)).